The sequence spans 75 residues: Putative membrane protein insertion efficiency factor (75 aa).

The protein belongs to the UPF0161 family.

The protein resides in the cell inner membrane. Functionally, could be involved in insertion of integral membrane proteins into the membrane. The chain is Putative membrane protein insertion efficiency factor from Gloeothece citriformis (strain PCC 7424) (Cyanothece sp. (strain PCC 7424)).